We begin with the raw amino-acid sequence, 900 residues long: DNA mismatch repair protein MutS (900 aa).

Residue 637 to 644 coordinates ATP; that stretch reads GPNMAGKS.

The protein belongs to the DNA mismatch repair MutS family.

Functionally, this protein is involved in the repair of mismatches in DNA. It is possible that it carries out the mismatch recognition step. This protein has a weak ATPase activity. The polypeptide is DNA mismatch repair protein MutS (Methanosarcina barkeri (strain Fusaro / DSM 804)).